The following is a 33-amino-acid chain: Brevinin-2Ea (33 aa).

Residues cysteine 27 and cysteine 33 are joined by a disulfide bond.

The protein belongs to the frog skin active peptide (FSAP) family. Brevinin subfamily. Expressed by the skin glands.

It localises to the secreted. Its function is as follows. Shows antibacterial activity against representative Gram-negative and Gram-positive bacterial species, and hemolytic activity. The polypeptide is Brevinin-2Ea (Pelophylax lessonae (Pool frog)).